Here is a 179-residue protein sequence, read N- to C-terminus: Sec-independent protein translocase protein TatB (179 aa).

Residues 2–22 (FNGVGWGEVVVLLLIGLFVFG) form a helical membrane-spanning segment. A compositionally biased stretch (low complexity) spans 98–109 (LLGDDPPAAPSL). The disordered stretch occupies residues 98 to 179 (LLGDDPPAAP…TEVPFDSDAT (82 aa)).

The protein belongs to the TatB family. As to quaternary structure, the Tat system comprises two distinct complexes: a TatABC complex, containing multiple copies of TatA, TatB and TatC subunits, and a separate TatA complex, containing only TatA subunits. Substrates initially bind to the TatABC complex, which probably triggers association of the separate TatA complex to form the active translocon.

Its subcellular location is the cell membrane. Part of the twin-arginine translocation (Tat) system that transports large folded proteins containing a characteristic twin-arginine motif in their signal peptide across membranes. Together with TatC, TatB is part of a receptor directly interacting with Tat signal peptides. TatB may form an oligomeric binding site that transiently accommodates folded Tat precursor proteins before their translocation. The protein is Sec-independent protein translocase protein TatB of Frankia casuarinae (strain DSM 45818 / CECT 9043 / HFP020203 / CcI3).